Consider the following 161-residue polypeptide: Probable chemoreceptor glutamine deamidase CheD (161 aa).

This sequence belongs to the CheD family.

It carries out the reaction L-glutaminyl-[protein] + H2O = L-glutamyl-[protein] + NH4(+). In terms of biological role, probably deamidates glutamine residues to glutamate on methyl-accepting chemotaxis receptors (MCPs), playing an important role in chemotaxis. The chain is Probable chemoreceptor glutamine deamidase CheD from Trichlorobacter lovleyi (strain ATCC BAA-1151 / DSM 17278 / SZ) (Geobacter lovleyi).